Consider the following 346-residue polypeptide: Methionine import ATP-binding protein MetN 1 (346 aa).

The ABC transporter domain occupies 2 to 241 (IELKNVSKVF…PQHVTTKKFV (240 aa)). Position 38–45 (38–45 (GYSGAGKS)) interacts with ATP.

Belongs to the ABC transporter superfamily. Methionine importer (TC 3.A.1.24) family. In terms of assembly, the complex is composed of two ATP-binding proteins (MetN), two transmembrane proteins (MetI) and a solute-binding protein (MetQ).

The protein localises to the cell membrane. It catalyses the reaction L-methionine(out) + ATP + H2O = L-methionine(in) + ADP + phosphate + H(+). The enzyme catalyses D-methionine(out) + ATP + H2O = D-methionine(in) + ADP + phosphate + H(+). Its function is as follows. Part of the ABC transporter complex MetNIQ involved in methionine import. Responsible for energy coupling to the transport system. The sequence is that of Methionine import ATP-binding protein MetN 1 from Bacillus cereus (strain ATCC 10987 / NRS 248).